Consider the following 107-residue polypeptide: UPF0145 protein CHY_0465 (107 aa).

Belongs to the UPF0145 family.

In Carboxydothermus hydrogenoformans (strain ATCC BAA-161 / DSM 6008 / Z-2901), this protein is UPF0145 protein CHY_0465.